A 289-amino-acid polypeptide reads, in one-letter code: Acetyl-coenzyme A carboxylase carboxyl transferase subunit beta (289 aa).

The CoA carboxyltransferase N-terminal domain occupies 28 to 289 (VMTKCPKCKK…QGGEMAVWQS (262 aa)). Residues C32, C35, C51, and C54 each coordinate Zn(2+). Residues 32–54 (CPKCKKIMYTKEVLKNLKVCVNC) form a C4-type zinc finger.

This sequence belongs to the AccD/PCCB family. As to quaternary structure, acetyl-CoA carboxylase is a heterohexamer composed of biotin carboxyl carrier protein (AccB), biotin carboxylase (AccC) and two subunits each of ACCase subunit alpha (AccA) and ACCase subunit beta (AccD). The cofactor is Zn(2+).

Its subcellular location is the cytoplasm. It catalyses the reaction N(6)-carboxybiotinyl-L-lysyl-[protein] + acetyl-CoA = N(6)-biotinyl-L-lysyl-[protein] + malonyl-CoA. It participates in lipid metabolism; malonyl-CoA biosynthesis; malonyl-CoA from acetyl-CoA: step 1/1. Component of the acetyl coenzyme A carboxylase (ACC) complex. Biotin carboxylase (BC) catalyzes the carboxylation of biotin on its carrier protein (BCCP) and then the CO(2) group is transferred by the transcarboxylase to acetyl-CoA to form malonyl-CoA. The sequence is that of Acetyl-coenzyme A carboxylase carboxyl transferase subunit beta from Bacillus thuringiensis (strain Al Hakam).